The chain runs to 475 residues: Bifunctional protein HldE (475 aa).

A ribokinase region spans residues 1 to 318; sequence MMQYSLKFNQ…ENAIHHREET (318 aa). 195-198 serves as a coordination point for ATP; sequence NMAE. Residue Asp-264 is part of the active site. Residues 344–475 form a cytidylyltransferase region; it reads MTNGCFDILH…DVIKKIQAIR (132 aa).

In the N-terminal section; belongs to the carbohydrate kinase PfkB family. This sequence in the C-terminal section; belongs to the cytidylyltransferase family. As to quaternary structure, homodimer.

The catalysed reaction is D-glycero-beta-D-manno-heptose 7-phosphate + ATP = D-glycero-beta-D-manno-heptose 1,7-bisphosphate + ADP + H(+). It catalyses the reaction D-glycero-beta-D-manno-heptose 1-phosphate + ATP + H(+) = ADP-D-glycero-beta-D-manno-heptose + diphosphate. Its pathway is nucleotide-sugar biosynthesis; ADP-L-glycero-beta-D-manno-heptose biosynthesis; ADP-L-glycero-beta-D-manno-heptose from D-glycero-beta-D-manno-heptose 7-phosphate: step 1/4. It functions in the pathway nucleotide-sugar biosynthesis; ADP-L-glycero-beta-D-manno-heptose biosynthesis; ADP-L-glycero-beta-D-manno-heptose from D-glycero-beta-D-manno-heptose 7-phosphate: step 3/4. The protein operates within bacterial outer membrane biogenesis; LOS core biosynthesis. Its function is as follows. Catalyzes the phosphorylation of D-glycero-D-manno-heptose 7-phosphate at the C-1 position to selectively form D-glycero-beta-D-manno-heptose-1,7-bisphosphate. In terms of biological role, catalyzes the ADP transfer from ATP to D-glycero-beta-D-manno-heptose 1-phosphate, yielding ADP-D-glycero-beta-D-manno-heptose. In Haemophilus ducreyi (strain 35000HP / ATCC 700724), this protein is Bifunctional protein HldE.